Consider the following 243-residue polypeptide: HTH-type quorum sensing-dependent transcriptional regulator RpaR (243 aa).

In terms of domain architecture, HTH luxR-type spans 174–239 (KPIRRNRLTP…AAVAKALTLG (66 aa)). Positions 198–217 (AWEISVILCITERTVKFHLI) form a DNA-binding region, H-T-H motif.

Belongs to the autoinducer-regulated transcriptional regulatory protein family.

Functionally, responds to the quorum-sensing autoinducer 4-coumaroyl-homoserine lactone to regulate expression of several genes. Represses expression of rpaI in the absence of the inducer. The polypeptide is HTH-type quorum sensing-dependent transcriptional regulator RpaR (Rhodopseudomonas palustris (strain ATCC BAA-98 / CGA009)).